Here is an 82-residue protein sequence, read N- to C-terminus: Ranatensin (82 aa).

The signal sequence occupies residues Met-1–Ser-27. Residues Val-28–Arg-47 constitute a propeptide that is removed on maturation. Residue Met-58 is modified to Methionine amide. The propeptide occupies Ser-62–Ser-82.

This sequence belongs to the bombesin/neuromedin-B/ranatensin family. In terms of tissue distribution, expressed by the skin glands.

It localises to the secreted. The protein is Ranatensin of Lithobates pipiens (Northern leopard frog).